The following is a 430-amino-acid chain: Tol-Pal system protein TolB (430 aa).

Residues 1–21 form the signal peptide; it reads MKQAFRVALGFLVLWASVLHA.

Belongs to the TolB family. As to quaternary structure, the Tol-Pal system is composed of five core proteins: the inner membrane proteins TolA, TolQ and TolR, the periplasmic protein TolB and the outer membrane protein Pal. They form a network linking the inner and outer membranes and the peptidoglycan layer.

It localises to the periplasm. Functionally, part of the Tol-Pal system, which plays a role in outer membrane invagination during cell division and is important for maintaining outer membrane integrity. TolB occupies a key intermediary position in the Tol-Pal system because it communicates directly with both membrane-embedded components, Pal in the outer membrane and TolA in the inner membrane. This Yersinia enterocolitica serotype O:8 / biotype 1B (strain NCTC 13174 / 8081) protein is Tol-Pal system protein TolB.